We begin with the raw amino-acid sequence, 374 residues long: Cyclin-dependent kinase 9 (374 aa).

In terms of domain architecture, Protein kinase spans 19 to 318; the sequence is YEKLAKIGQG…SDDALNHDFF (300 aa). Residues 25 to 33 and K48 each bind ATP; that span reads IGQGTFGEV. Residue D151 is the Proton acceptor of the active site. The interval 345–374 is disordered; the sequence is PRRRGHMPQQPANQNRNPATTSQSEFDRVF. Positions 354 to 368 are enriched in polar residues; that stretch reads QPANQNRNPATTSQS.

This sequence belongs to the protein kinase superfamily. CMGC Ser/Thr protein kinase family. CDC2/CDKX subfamily. As to quaternary structure, component of the super elongation complex (SEC). Associates with ccnt1/cyclin-T1, ccnt2/cyclin-T2 or ccnk/cyclin-K to form active P-TEFb.

Its subcellular location is the nucleus. The protein localises to the cytoplasm. The protein resides in the PML body. It catalyses the reaction L-seryl-[protein] + ATP = O-phospho-L-seryl-[protein] + ADP + H(+). The catalysed reaction is L-threonyl-[protein] + ATP = O-phospho-L-threonyl-[protein] + ADP + H(+). The enzyme catalyses [DNA-directed RNA polymerase] + ATP = phospho-[DNA-directed RNA polymerase] + ADP + H(+). Functionally, protein kinase involved in the regulation of transcription. Member of the cyclin-dependent kinase pair (CDK9/cyclin-T) complex, also called positive transcription elongation factor b (P-TEFb), which facilitates the transition from abortive to productive elongation by phosphorylating the CTD (C-terminal domain) of the large subunit of RNA polymerase II (RNAP II) polr2a, supt5h and rdbp. This complex is inactive when in the 7SK snRNP complex form. Regulates cytokine inducible transcription networks by facilitating promoter recognition of target transcription factors. P-TEFb is also involved in cotranscriptional histone modification, mRNA processing and mRNA export. The polypeptide is Cyclin-dependent kinase 9 (Danio rerio (Zebrafish)).